A 329-amino-acid polypeptide reads, in one-letter code: MSQYVVCALYKFVALDDYQEIRQPLTEVLEANQIRGTLLLASEGINGTVAGKRESIDALLQWFKQDSRLADVVYKESFNEEQPFNRTKVKLKKEIVTMGVEGIDPRHVVGTYVKPNEWNALISDPDVILVDTRNDYEVDIGTFKNAVNPNTETFREFPQYVEDNLDPKKHKKVAMFCTGGIRCEKSTAYMKEQGFDEVYHLEGGILKYLEEVPEEESMWEGDCYVFDGRVAVNHQLEKSGYDVCNACRLPITDEDKASDHFEKGVSCPKCIDKHSDEQKARFREREKQVQLSNARGETHVGGDAAHLIDQRKKEKLAHKEQQRSGKKAK.

The Rhodanese domain maps to Ser-123–Ser-217. The active-site Cysteine persulfide intermediate is Cys-177. A disordered region spans residues Arg-285–Lys-329. Residues Gly-296–Arg-323 show a composition bias toward basic and acidic residues.

It belongs to the TrhO family.

The enzyme catalyses uridine(34) in tRNA + AH2 + O2 = 5-hydroxyuridine(34) in tRNA + A + H2O. Its function is as follows. Catalyzes oxygen-dependent 5-hydroxyuridine (ho5U) modification at position 34 in tRNAs. This Vibrio atlanticus (strain LGP32) (Vibrio splendidus (strain Mel32)) protein is tRNA uridine(34) hydroxylase.